The chain runs to 325 residues: Methionine import ATP-binding protein MetN 3 (325 aa).

One can recognise an ABC transporter domain in the interval 2–239; the sequence is IEVQQLCKVY…PQSALGRALL (238 aa). 36 to 43 is a binding site for ATP; that stretch reads GRSGAGKS.

Belongs to the ABC transporter superfamily. Methionine importer (TC 3.A.1.24) family. As to quaternary structure, the complex is composed of two ATP-binding proteins (MetN), two transmembrane proteins (MetI) and a solute-binding protein (MetQ).

It localises to the cell inner membrane. The catalysed reaction is L-methionine(out) + ATP + H2O = L-methionine(in) + ADP + phosphate + H(+). It catalyses the reaction D-methionine(out) + ATP + H2O = D-methionine(in) + ADP + phosphate + H(+). Functionally, part of the ABC transporter complex MetNIQ involved in methionine import. Responsible for energy coupling to the transport system. This is Methionine import ATP-binding protein MetN 3 from Pseudomonas fluorescens (strain ATCC BAA-477 / NRRL B-23932 / Pf-5).